A 32-amino-acid polypeptide reads, in one-letter code: Periplasmic [NiFeSe] hydrogenase small subunit (32 aa).

[4Fe-4S] cluster-binding residues include cysteine 18 and cysteine 21.

The protein belongs to the [NiFe]/[NiFeSe] hydrogenase small subunit family. Heterodimer of a large and a small subunit. It depends on [3Fe-4S] cluster as a cofactor. [4Fe-4S] cluster serves as cofactor.

The protein resides in the periplasm. It catalyses the reaction H2 + A = AH2. In Desulfomicrobium norvegicum (strain DSM 1741 / NCIMB 8310) (Desulfovibrio baculatus (strain Norway 4)), this protein is Periplasmic [NiFeSe] hydrogenase small subunit.